A 293-amino-acid polypeptide reads, in one-letter code: Magnetosome protein MamB (293 aa).

The Cytoplasmic portion of the chain corresponds to 1–12; sequence MTTAACRKCRDE. The tract at residues 1-214 is transmembrane domain (TMD); it reads MTTAACRKCR…GLMDTSVEND (214 aa). The chain crosses the membrane as a helical span at residues 13 to 33; that stretch reads VIWWAFFINIGQTTYKGVLGV. Residues 34 to 78 lie on the Lumenal side of the membrane; it reads LSGSAALVADAMHSGADVVATLVTMFSVKVSDKKADEKYPFGYGN. The helical transmembrane segment at 79 to 99 threads the bilayer; the sequence is IQFIASSIVGLILFFGALYLM. Over 100–105 the chain is Cytoplasmic; sequence YESTMQ. Residues 106 to 126 form a helical membrane-spanning segment; the sequence is IIAGNTSSPSPFAVLGAIVSI. Residues 127–158 lie on the Lumenal side of the membrane; the sequence is ATNELMFRYQSCVGRQNNSPAIIANAWDNRSD. The helical transmembrane segment at 159-179 threads the bilayer; that stretch reads ALSSVAVLIGIVAAVVGFPIA. Topologically, residues 180-293 are cytoplasmic; sequence DRLAAIGVGI…VGVTPVRIAA (114 aa). A C-terminal domain (CTD) region spans residues 215–293; sequence VLVDAYNIAK…VGVTPVRIAA (79 aa). Zn(2+) is bound by residues H245, D247, and H283.

This sequence belongs to the cation diffusion facilitator (CDF) transporter (TC 2.A.4) family. The isolated C-terminal domain (approximately 213-293) forms homodimers. Forms heterodimers with MamM.

The protein localises to the magnetosome membrane. Its function is as follows. Plays a dual, essential role in magnetosome formation; required for magnetosome vesicle formation as well as biomineralization. Probably binds and transports iron. Requires heterodimerization with MamM for stability. This Magnetospira sp. (strain QH-2) (Marine magnetic spirillum (strain QH-2)) protein is Magnetosome protein MamB (mamB).